A 317-amino-acid chain; its full sequence is uncharacterized protein (317 aa).

Residues 11-31 form a helical membrane-spanning segment; that stretch reads ALLLVIFGSLIVSFAIFFMVL. PASTA domains are found at residues 33–100, 101–174, and 180–241; these read NNEI…FISK, GAII…LISK, and DKHV…TIAK.

Its subcellular location is the membrane. This is an uncharacterized protein from Borreliella burgdorferi (strain ATCC 35210 / DSM 4680 / CIP 102532 / B31) (Borrelia burgdorferi).